Reading from the N-terminus, the 250-residue chain is Triosephosphate isomerase (250 aa).

A substrate-binding site is contributed by 9 to 11 (NWK). Residue histidine 96 is the Electrophile of the active site. Glutamate 168 serves as the catalytic Proton acceptor. Residues glycine 174, serine 216, and 237 to 238 (GG) contribute to the substrate site.

The protein belongs to the triosephosphate isomerase family. As to quaternary structure, homodimer.

The protein resides in the cytoplasm. It carries out the reaction D-glyceraldehyde 3-phosphate = dihydroxyacetone phosphate. It participates in carbohydrate biosynthesis; gluconeogenesis. The protein operates within carbohydrate degradation; glycolysis; D-glyceraldehyde 3-phosphate from glycerone phosphate: step 1/1. Functionally, involved in the gluconeogenesis. Catalyzes stereospecifically the conversion of dihydroxyacetone phosphate (DHAP) to D-glyceraldehyde-3-phosphate (G3P). In Leptospira borgpetersenii serovar Hardjo-bovis (strain JB197), this protein is Triosephosphate isomerase.